Here is a 259-residue protein sequence, read N- to C-terminus: MTLTAFVDDLARSLGFLSRLPIASRFFQNHSGEMSRTPRAFPLAGAVITAPAGLLLALMLGLGASSMVAAFAAIGLQVLLTGALHEDGFADTADGLGGANRERALDIMKDSRVGTFGVLALVFGVGLRVAALASLVNSLSPINVALVMIGIAAVSRALMVWHWHALPPAKPDGVAASLGKPEDNTLYTALFLGLAVAVVTIAPVTSFHPLAVMLVASGAAAFASNRLVSHRLGGQTGDTIGATQQICEITALASIAMAL.

Helical transmembrane passes span 43-63, 64-84, 116-136, 141-161, and 185-205; these read LAGAVITAPAGLLLALMLGLG, ASSMVAAFAAIGLQVLLTGAL, FGVLALVFGVGLRVAALASLV, PINVALVMIGIAAVSRALMVW, and TLYTALFLGLAVAVVTIAPVT.

Belongs to the CobS family. It depends on Mg(2+) as a cofactor.

It localises to the cell inner membrane. It carries out the reaction alpha-ribazole + adenosylcob(III)inamide-GDP = adenosylcob(III)alamin + GMP + H(+). The enzyme catalyses alpha-ribazole 5'-phosphate + adenosylcob(III)inamide-GDP = adenosylcob(III)alamin 5'-phosphate + GMP + H(+). The protein operates within cofactor biosynthesis; adenosylcobalamin biosynthesis; adenosylcobalamin from cob(II)yrinate a,c-diamide: step 7/7. In terms of biological role, joins adenosylcobinamide-GDP and alpha-ribazole to generate adenosylcobalamin (Ado-cobalamin). Also synthesizes adenosylcobalamin 5'-phosphate from adenosylcobinamide-GDP and alpha-ribazole 5'-phosphate. The polypeptide is Adenosylcobinamide-GDP ribazoletransferase (Allorhizobium ampelinum (strain ATCC BAA-846 / DSM 112012 / S4) (Agrobacterium vitis (strain S4))).